The sequence spans 306 residues: Pantothenate kinase (306 aa).

91 to 98 (GSVAVGKS) is an ATP binding site.

The protein belongs to the prokaryotic pantothenate kinase family.

The protein resides in the cytoplasm. The enzyme catalyses (R)-pantothenate + ATP = (R)-4'-phosphopantothenate + ADP + H(+). The protein operates within cofactor biosynthesis; coenzyme A biosynthesis; CoA from (R)-pantothenate: step 1/5. The protein is Pantothenate kinase (coaA) of Streptococcus pneumoniae serotype 4 (strain ATCC BAA-334 / TIGR4).